A 331-amino-acid chain; its full sequence is Adenosine deaminase (331 aa).

Positions 12 and 14 each coordinate Zn(2+). Positions 14, 16, and 170 each coordinate substrate. Histidine 197 is a binding site for Zn(2+). Residue glutamate 200 is the Proton donor of the active site. Aspartate 278 contacts Zn(2+). Residue aspartate 279 participates in substrate binding.

This sequence belongs to the metallo-dependent hydrolases superfamily. Adenosine and AMP deaminases family. Adenosine deaminase subfamily. Zn(2+) serves as cofactor.

The enzyme catalyses adenosine + H2O + H(+) = inosine + NH4(+). It carries out the reaction 2'-deoxyadenosine + H2O + H(+) = 2'-deoxyinosine + NH4(+). Its function is as follows. Catalyzes the hydrolytic deamination of adenosine and 2-deoxyadenosine. The protein is Adenosine deaminase of Shewanella sp. (strain W3-18-1).